The sequence spans 374 residues: Flap endonuclease 1 (374 aa).

The segment at 1 to 105 (MGVKGLNQLI…GELEKRMIRK (105 aa)) is N-domain. Asp34 contacts Mg(2+). 2 residues coordinate DNA: Arg47 and Arg71. The Mg(2+) site is built by Asp87, Glu159, Glu161, Asp180, and Asp182. Residues 123-254 (EMVRYEKRSV…VTAFKLIKEH (132 aa)) are I-domain. Position 159 (Glu159) interacts with DNA. Gly232 and Asp234 together coordinate DNA. A Mg(2+)-binding site is contributed by Asp234. The tract at residues 341-349 (VQGRLDGFF) is interaction with PCNA. A compositionally biased stretch (basic and acidic residues) spans 354 to 365 (TEKRKPEQDKKT). Residues 354–374 (TEKRKPEQDKKTKGSKKAKKK) form a disordered region.

It belongs to the XPG/RAD2 endonuclease family. FEN1 subfamily. Interacts with PCNA. Three molecules of FEN1 bind to one PCNA trimer with each molecule binding to one PCNA monomer. PCNA stimulates the nuclease activity without altering cleavage specificity. Mg(2+) is required as a cofactor. Phosphorylated. Phosphorylation upon DNA damage induces relocalization to the nuclear plasma.

It is found in the nucleus. The protein localises to the nucleolus. It localises to the nucleoplasm. The protein resides in the mitochondrion. Its function is as follows. Structure-specific nuclease with 5'-flap endonuclease and 5'-3' exonuclease activities involved in DNA replication and repair. During DNA replication, cleaves the 5'-overhanging flap structure that is generated by displacement synthesis when DNA polymerase encounters the 5'-end of a downstream Okazaki fragment. It enters the flap from the 5'-end and then tracks to cleave the flap base, leaving a nick for ligation. Also involved in the long patch base excision repair (LP-BER) pathway, by cleaving within the apurinic/apyrimidinic (AP) site-terminated flap. Acts as a genome stabilization factor that prevents flaps from equilibrating into structures that lead to duplications and deletions. Also possesses 5'-3' exonuclease activity on nicked or gapped double-stranded DNA, and exhibits RNase H activity. Also involved in replication and repair of rDNA and in repairing mitochondrial DNA. This is Flap endonuclease 1 from Meyerozyma guilliermondii (strain ATCC 6260 / CBS 566 / DSM 6381 / JCM 1539 / NBRC 10279 / NRRL Y-324) (Yeast).